The primary structure comprises 457 residues: MDRRIFGIETEYGVTCAAPDGRGLSADEVARYLFRKVVAWGRSSNVFLRNGSRLYLDVGSHPEYATAECDDVRQLVTYDKGGERILEGLVADAQQRLEHEGLPGTVHLFKNNTDSAGNSYGCHENYLVRRQGDFARLSDILVPFLITRQVLVGAGKVLATPRGAVYCLSQRADHIWEAVSSATTRSRPIINTRDEPHADAEYFRRLHVIVGDSSMAEPTTMLKVGATDLVLRLVEAGVIMRDLSLENPIRAIREISHDRTGTHAVQLADGRTMTAVDIQGEYFRRVREHVDAHGINDADPSPTTKAVLDLWERGLHALESGDLSSVDRELDWVIKLRLIERYQAKHGLELDDPRIARLDLAYHDISRTEGLYNLLAARGMVERVTTDLEILESTAVPPPTTRAKLRGDFVRAAQDARRDYTVDWVHLKLNDQAQRTVLCKDPFRSVDERVDRLIESM.

Position 9 (Glu9) interacts with Mg(2+). An ATP-binding site is contributed by Arg53. Tyr55 provides a ligand contact to Mg(2+). Asp57 acts as the Proton acceptor in catalysis. Residue Glu63 coordinates Mg(2+). ATP contacts are provided by Thr66 and Trp424.

The protein belongs to the Pup ligase/Pup deamidase family. Pup-conjugating enzyme subfamily.

The catalysed reaction is ATP + [prokaryotic ubiquitin-like protein]-L-glutamate + [protein]-L-lysine = ADP + phosphate + N(6)-([prokaryotic ubiquitin-like protein]-gamma-L-glutamyl)-[protein]-L-lysine.. It functions in the pathway protein degradation; proteasomal Pup-dependent pathway. The protein operates within protein modification; protein pupylation. Functionally, catalyzes the covalent attachment of the prokaryotic ubiquitin-like protein modifier Pup to the proteasomal substrate proteins, thereby targeting them for proteasomal degradation. This tagging system is termed pupylation. The ligation reaction involves the side-chain carboxylate of the C-terminal glutamate of Pup and the side-chain amino group of a substrate lysine. This is Pup--protein ligase from Xylanimonas cellulosilytica (strain DSM 15894 / JCM 12276 / CECT 5975 / KCTC 9989 / LMG 20990 / NBRC 107835 / XIL07).